Here is a 147-residue protein sequence, read N- to C-terminus: UPF0178 protein Patl_1318 (147 aa).

The protein belongs to the UPF0178 family.

The chain is UPF0178 protein Patl_1318 from Pseudoalteromonas atlantica (strain T6c / ATCC BAA-1087).